The primary structure comprises 348 residues: Phospho-2-dehydro-3-deoxyheptonate aldolase, Trp-sensitive (348 aa).

The protein belongs to the class-I DAHP synthase family.

The catalysed reaction is D-erythrose 4-phosphate + phosphoenolpyruvate + H2O = 7-phospho-2-dehydro-3-deoxy-D-arabino-heptonate + phosphate. It functions in the pathway metabolic intermediate biosynthesis; chorismate biosynthesis; chorismate from D-erythrose 4-phosphate and phosphoenolpyruvate: step 1/7. Stereospecific condensation of phosphoenolpyruvate (PEP) and D-erythrose-4-phosphate (E4P) giving rise to 3-deoxy-D-arabino-heptulosonate-7-phosphate (DAHP). In Shigella flexneri, this protein is Phospho-2-dehydro-3-deoxyheptonate aldolase, Trp-sensitive (aroH).